The sequence spans 777 residues: Nuclear autoantigenic sperm protein (777 aa).

At Ala-2 the chain carries N-acetylalanine. At Lys-34 the chain carries N6-acetyllysine. Residues 44–77 (AKKLLGLGQKHLVMGDIPAAVNAFQEAASLLGKK) form a TPR 1 repeat. The segment at 117–128 (EEEEGEKTEEES) is histone-binding. Position 124 is a phosphothreonine (Thr-124). Ser-128 is subject to Phosphoserine. Composition is skewed to basic and acidic residues over residues 152–186 (MGEKEAQKTEDKSLVKPEMDKEQETEMEKGGREDM), 227–259 (VTSKKPDQEIPGAEEGKSVSETDVQEECREKGG), and 267–276 (IEEKPKEASK). The segment at 152 to 496 (MGEKEAQKTE…ALENKSLQEN (345 aa)) is disordered. Residues 211 to 244 (EEGKGAAAPEGLSEAEVTSKKPDQEIPGAEEGKS) are histone-binding. Lys-243 carries the N6-acetyllysine modification. Residue Ser-244 is modified to Phosphoserine. The residue at position 285 (Lys-285) is an N6-acetyllysine. The segment covering 303–319 (DEPKEQVAASESERGKA) has biased composition (basic and acidic residues). A Phosphoserine modification is found at Ser-312. A compositionally biased stretch (low complexity) spans 342–353 (AADASAAEAGSE). Phosphoserine is present on residues Ser-399, Ser-411, and Ser-440. Residues 458-501 (EQMKEGEETEGSEEEDKENDKAEETLNDSALENKSLQENEEEEI) form a histone-binding region. A compositionally biased stretch (acidic residues) spans 464–474 (EETEGSEEEDK). A Phosphothreonine modification is found at Thr-466. Residues Ser-469, Ser-486, and Ser-492 each carry the phosphoserine modification. Polar residues predominate over residues 484–493 (NDSALENKSL). TPR repeat units lie at residues 531–564 (AQAHLKLGEVSVESENYLQAVEEFQACLNLQEQY) and 573–606 (AETHYQLGLAYGYNSQYDEAVAQFSKSIEVIEKR). Residues 593–648 (VAQFSKSIEVIEKRMAVLNEQMKEAEGSPTEYEKEIEELKELLPEIREKIEDAKES) adopt a coiled-coil conformation. Ser-651 carries the post-translational modification Phosphoserine. Positions 667 to 681 (STSGFTPSGGSSSVS) are enriched in low complexity. The tract at residues 667 to 777 (STSGFTPSGG…AGATVESTAC (111 aa)) is disordered. The residue at position 672 (Thr-672) is a Phosphothreonine. Ser-694 and Ser-695 each carry phosphoserine. The Nuclear localization signal motif lies at 705-711 (VRKKRKP). Positions 710–728 (KPEEESPRKDDAKKAKQEP) are enriched in basic and acidic residues. Residue Ser-715 is modified to Phosphoserine. Residue Lys-725 forms a Glycyl lysine isopeptide (Lys-Gly) (interchain with G-Cter in SUMO1) linkage. Ser-734 is modified (phosphoserine).

Belongs to the NASP family. In terms of assembly, binds to linker H1 histones. Interacts with histones H2A, H2B, H3 and H4. Interacts with histone H3.3. Interacts with histones H3 and H4; NASP is a histone chaperone that stabilizes and maintains a soluble pool of histone H3-H4 dimers. Interacts with ASF1A and ASF1B; the interaction is probably indirect and mediated by H3-H4. Also binds to HSP90 in the cytoplasm. This interaction stimulates binding of NASP to H1-6/H1T.

The protein resides in the cytoplasm. The protein localises to the nucleus. Functionally, component of the histone chaperone network. Binds and stabilizes histone H3-H4 not bound to chromatin to maintain a soluble reservoir and modulate degradation by chaperone-mediated autophagy. Required for DNA replication, normal cell cycle progression and cell proliferation. Forms a cytoplasmic complex with HSP90 and H1 linker histones and stimulates HSP90 ATPase activity. NASP and H1 histone are subsequently released from the complex and translocate to the nucleus where the histone is released for binding to DNA. This Bos taurus (Bovine) protein is Nuclear autoantigenic sperm protein.